A 95-amino-acid polypeptide reads, in one-letter code: Aspartyl/glutamyl-tRNA(Asn/Gln) amidotransferase subunit C (95 aa).

Belongs to the GatC family. Heterotrimer of A, B and C subunits.

It carries out the reaction L-glutamyl-tRNA(Gln) + L-glutamine + ATP + H2O = L-glutaminyl-tRNA(Gln) + L-glutamate + ADP + phosphate + H(+). The catalysed reaction is L-aspartyl-tRNA(Asn) + L-glutamine + ATP + H2O = L-asparaginyl-tRNA(Asn) + L-glutamate + ADP + phosphate + 2 H(+). Allows the formation of correctly charged Asn-tRNA(Asn) or Gln-tRNA(Gln) through the transamidation of misacylated Asp-tRNA(Asn) or Glu-tRNA(Gln) in organisms which lack either or both of asparaginyl-tRNA or glutaminyl-tRNA synthetases. The reaction takes place in the presence of glutamine and ATP through an activated phospho-Asp-tRNA(Asn) or phospho-Glu-tRNA(Gln). The polypeptide is Aspartyl/glutamyl-tRNA(Asn/Gln) amidotransferase subunit C (Rhodospirillum rubrum (strain ATCC 11170 / ATH 1.1.1 / DSM 467 / LMG 4362 / NCIMB 8255 / S1)).